Here is an 896-residue protein sequence, read N- to C-terminus: Isoleucine--tRNA ligase (896 aa).

Positions 57-67 match the 'HIGH' region motif; sequence PYANNNIHIGH. E543 is an L-isoleucyl-5'-AMP binding site. Positions 584 to 588 match the 'KMSKS' region motif; it reads KMSKS. K587 provides a ligand contact to ATP. Zn(2+)-binding residues include C869, C872, C885, and C888.

This sequence belongs to the class-I aminoacyl-tRNA synthetase family. IleS type 1 subfamily. Monomer. Zn(2+) is required as a cofactor.

The protein resides in the cytoplasm. The catalysed reaction is tRNA(Ile) + L-isoleucine + ATP = L-isoleucyl-tRNA(Ile) + AMP + diphosphate. Catalyzes the attachment of isoleucine to tRNA(Ile). As IleRS can inadvertently accommodate and process structurally similar amino acids such as valine, to avoid such errors it has two additional distinct tRNA(Ile)-dependent editing activities. One activity is designated as 'pretransfer' editing and involves the hydrolysis of activated Val-AMP. The other activity is designated 'posttransfer' editing and involves deacylation of mischarged Val-tRNA(Ile). This chain is Isoleucine--tRNA ligase, found in Acholeplasma laidlawii (strain PG-8A).